The chain runs to 138 residues: Large ribosomal subunit protein uL16m (138 aa).

The protein belongs to the universal ribosomal protein uL16 family.

The protein resides in the mitochondrion. In Chondrus crispus (Carrageen Irish moss), this protein is Large ribosomal subunit protein uL16m (RPL16).